The chain runs to 206 residues: Urease accessory protein UreG (206 aa).

A GTP-binding site is contributed by 11-18; sequence GPVGSGKT.

The protein belongs to the SIMIBI class G3E GTPase family. UreG subfamily. In terms of assembly, homodimer. UreD, UreF and UreG form a complex that acts as a GTP-hydrolysis-dependent molecular chaperone, activating the urease apoprotein by helping to assemble the nickel containing metallocenter of UreC. The UreE protein probably delivers the nickel.

The protein resides in the cytoplasm. Facilitates the functional incorporation of the urease nickel metallocenter. This process requires GTP hydrolysis, probably effectuated by UreG. The polypeptide is Urease accessory protein UreG (Mycolicibacterium gilvum (strain PYR-GCK) (Mycobacterium gilvum (strain PYR-GCK))).